We begin with the raw amino-acid sequence, 237 residues long: 1-(5-phosphoribosyl)-5-[(5-phosphoribosylamino)methylideneamino] imidazole-4-carboxamide isomerase (237 aa).

Asp8 (proton acceptor) is an active-site residue. Asp128 acts as the Proton donor in catalysis.

Belongs to the HisA/HisF family.

The protein localises to the cytoplasm. The enzyme catalyses 1-(5-phospho-beta-D-ribosyl)-5-[(5-phospho-beta-D-ribosylamino)methylideneamino]imidazole-4-carboxamide = 5-[(5-phospho-1-deoxy-D-ribulos-1-ylimino)methylamino]-1-(5-phospho-beta-D-ribosyl)imidazole-4-carboxamide. It functions in the pathway amino-acid biosynthesis; L-histidine biosynthesis; L-histidine from 5-phospho-alpha-D-ribose 1-diphosphate: step 4/9. In Gemmatimonas aurantiaca (strain DSM 14586 / JCM 11422 / NBRC 100505 / T-27), this protein is 1-(5-phosphoribosyl)-5-[(5-phosphoribosylamino)methylideneamino] imidazole-4-carboxamide isomerase.